Reading from the N-terminus, the 195-residue chain is Small ribosomal subunit protein uS4c (195 aa).

Positions 82–143 (MRLDNILFRL…KQRSKALIQN (62 aa)) constitute an S4 RNA-binding domain.

This sequence belongs to the universal ribosomal protein uS4 family. In terms of assembly, part of the 30S ribosomal subunit. Contacts protein S5. The interaction surface between S4 and S5 is involved in control of translational fidelity.

Its subcellular location is the plastid. The protein resides in the chloroplast. Its function is as follows. One of the primary rRNA binding proteins, it binds directly to 16S rRNA where it nucleates assembly of the body of the 30S subunit. With S5 and S12 plays an important role in translational accuracy. The sequence is that of Small ribosomal subunit protein uS4c (rps4) from Pillansia templemannii.